The chain runs to 145 residues: Large ribosomal subunit protein uL15 (145 aa).

The tract at residues 1–54 is disordered; the sequence is MKLNELKYTPGSKKEATRVGRGMASGKGKTATRGHKGQNSRSGGGVRPGFEGGQ. Positions 42–52 are enriched in gly residues; the sequence is SGGGVRPGFEG.

Belongs to the universal ribosomal protein uL15 family. In terms of assembly, part of the 50S ribosomal subunit.

Functionally, binds to the 23S rRNA. The polypeptide is Large ribosomal subunit protein uL15 (Mycoplasma capricolum subsp. capricolum (strain California kid / ATCC 27343 / NCTC 10154)).